A 1597-amino-acid polypeptide reads, in one-letter code: THO complex subunit 2 (1597 aa).

2 disordered regions span residues 1250 to 1274 (KSQR…SKDR) and 1384 to 1597 (EPYP…RYQR). Residues 1419–1430 (GSSNYRGPSNDR) show a composition bias toward polar residues. Composition is skewed to basic and acidic residues over residues 1458 to 1490 (TYND…EYKK), 1500 to 1512 (FPEK…KDSS), 1522 to 1545 (YKRD…ETIR), and 1554 to 1567 (RNTR…RANE). The span at 1568–1582 (NQRYNGNRKSNTQAL) shows a compositional bias: polar residues.

Belongs to the THOC2 family. Component of the THO complex, which is composed of HPR1, MFT1, THO2 and THP2. Together with SUB2, TEX1 and YRA1, THO forms the transcription/export (TREX) complex. THO associates with DNA and RNA in vitro.

It localises to the nucleus. Its function is as follows. Component the THO subcomplex of the TREX complex, which operates in coupling transcription elongation to mRNA export. The THO complex is recruited to transcribed genes and moves along the gene with the elongating polymerase during transcription. THO is important for stabilizing nascent RNA in the RNA polymerase II elongation complex by preventing formation of DNA:RNA hybrids behind the elongating polymerase. It functions in cotranscriptional formation of an export-competent messenger ribonucleoprotein particle (mRNP) by facilitating the loading of ATP-dependent RNA helicase SUB2 and the mRNA export factor YRA1 along the nascent mRNA. The sequence is that of THO complex subunit 2 (THO2) from Saccharomyces cerevisiae (strain ATCC 204508 / S288c) (Baker's yeast).